A 181-amino-acid chain; its full sequence is UPF0302 protein LMHCC_0635 (181 aa).

Belongs to the UPF0302 family.

In Listeria monocytogenes serotype 4a (strain HCC23), this protein is UPF0302 protein LMHCC_0635.